The chain runs to 209 residues: Uracil phosphoribosyltransferase (209 aa).

Residues arginine 79, arginine 104, and 131–139 contribute to the 5-phospho-alpha-D-ribose 1-diphosphate site; that span reads DPMLATGGS. Residues isoleucine 194 and 199–201 each bind uracil; that span reads GDA. Aspartate 200 is a binding site for 5-phospho-alpha-D-ribose 1-diphosphate.

This sequence belongs to the UPRTase family. Mg(2+) serves as cofactor.

It carries out the reaction UMP + diphosphate = 5-phospho-alpha-D-ribose 1-diphosphate + uracil. The protein operates within pyrimidine metabolism; UMP biosynthesis via salvage pathway; UMP from uracil: step 1/1. With respect to regulation, allosterically activated by GTP. Functionally, catalyzes the conversion of uracil and 5-phospho-alpha-D-ribose 1-diphosphate (PRPP) to UMP and diphosphate. This Lacticaseibacillus paracasei (strain ATCC 334 / BCRC 17002 / CCUG 31169 / CIP 107868 / KCTC 3260 / NRRL B-441) (Lactobacillus paracasei) protein is Uracil phosphoribosyltransferase.